Here is a 204-residue protein sequence, read N- to C-terminus: Outer-membrane lipoprotein carrier protein (204 aa).

Residues 1 to 21 form the signal peptide; sequence MKKYLNLTALLLVGISNVTWA.

It belongs to the LolA family. As to quaternary structure, monomer.

The protein resides in the periplasm. Participates in the translocation of lipoproteins from the inner membrane to the outer membrane. Only forms a complex with a lipoprotein if the residue after the N-terminal Cys is not an aspartate (The Asp acts as a targeting signal to indicate that the lipoprotein should stay in the inner membrane). This chain is Outer-membrane lipoprotein carrier protein, found in Histophilus somni (strain 129Pt) (Haemophilus somnus).